A 662-amino-acid polypeptide reads, in one-letter code: Histidine decarboxylase (662 aa).

Residues tyrosine 88 and histidine 201 each contribute to the substrate site. N6-(pyridoxal phosphate)lysine is present on lysine 312. The segment at 489–518 (QPSPRAKNVIPPPPGTRGLSLESVSEGGDD) is disordered.

The protein belongs to the group II decarboxylase family. Homodimer. Pyridoxal 5'-phosphate serves as cofactor.

The enzyme catalyses L-histidine + H(+) = histamine + CO2. Its pathway is amine and polyamine biosynthesis; histamine biosynthesis; histamine from L-histidine: step 1/1. Functionally, catalyzes the biosynthesis of histamine from histidine. The polypeptide is Histidine decarboxylase (Hdc) (Mus musculus (Mouse)).